The following is a 542-amino-acid chain: Putative sodium-dependent excitatory amino acid transporter glt-6 (542 aa).

The Cytoplasmic portion of the chain corresponds to Met-1–Glu-15. The next 3 membrane-spanning stretches (helical) occupy residues Asn-16–Leu-36, Ile-55–Ala-75, and Leu-93–Ile-113. The Extracellular portion of the chain corresponds to His-114–Lys-191. Asn-175 is a glycosylation site (N-linked (GlcNAc...) asparagine). Helical transmembrane passes span Gly-192–Leu-212, Val-234–Leu-254, Val-265–Val-285, Gly-303–Met-323, and Thr-386–Leu-406. Over residues Arg-505–Ser-517 the composition is skewed to low complexity. The interval Arg-505–Val-542 is disordered. Residues Thr-518–Ile-529 are compositionally biased toward polar residues.

Belongs to the dicarboxylate/amino acid:cation symporter (DAACS) (TC 2.A.23) family.

The protein localises to the membrane. This Caenorhabditis elegans protein is Putative sodium-dependent excitatory amino acid transporter glt-6 (glt-6).